A 204-amino-acid chain; its full sequence is CASP-like protein 1U3 (204 aa).

Over M1–N19 the chain is Cytoplasmic. A helical membrane pass occupies residues L20 to A40. The Extracellular portion of the chain corresponds to S41–P63. Residues F64–L84 traverse the membrane as a helical segment. Topologically, residues T85–V97 are cytoplasmic. A helical membrane pass occupies residues L98 to F118. Topologically, residues A119–Q146 are extracellular. The helical transmembrane segment at V147 to V167 threads the bilayer. At K168–H204 the chain is on the cytoplasmic side. The tract at residues S173 to H204 is disordered.

This sequence belongs to the Casparian strip membrane proteins (CASP) family. As to quaternary structure, homodimer and heterodimers.

Its subcellular location is the cell membrane. This chain is CASP-like protein 1U3, found in Oryza sativa subsp. japonica (Rice).